Here is a 197-residue protein sequence, read N- to C-terminus: Thymidine kinase (197 aa).

Residues 9 to 16 (AAMNAGKS) and 83 to 86 (DESQ) contribute to the ATP site. Residue E84 is the Proton acceptor of the active site. Positions 141, 143, 178, and 181 each coordinate Zn(2+).

Belongs to the thymidine kinase family. In terms of assembly, homotetramer.

The protein resides in the cytoplasm. The catalysed reaction is thymidine + ATP = dTMP + ADP + H(+). This Albidiferax ferrireducens (strain ATCC BAA-621 / DSM 15236 / T118) (Rhodoferax ferrireducens) protein is Thymidine kinase.